We begin with the raw amino-acid sequence, 130 residues long: Large ribosomal subunit protein bL21 (130 aa).

This sequence belongs to the bacterial ribosomal protein bL21 family. As to quaternary structure, part of the 50S ribosomal subunit. Contacts protein L20.

Its function is as follows. This protein binds to 23S rRNA in the presence of protein L20. In Trichormus variabilis (strain ATCC 29413 / PCC 7937) (Anabaena variabilis), this protein is Large ribosomal subunit protein bL21.